The primary structure comprises 1050 residues: MDS1 and EVI1 complex locus protein EVI1-B (1050 aa).

3 consecutive C2H2-type zinc fingers follow at residues 21-48, 75-97, and 103-125; these read YHCEECDQLFESKTELSNHQKYSCGTPH, HECKECDQVFPDMQSLEKHLLSH, and YKCDQCPKAFNWKSNLIRHQMSH. A C2H2-type 4; degenerate zinc finger spans residues 131–155; the sequence is YECENCSKQVFTDPSNLQRHIRSQH. 2 consecutive C2H2-type zinc fingers follow at residues 161 to 183 and 189 to 211; these read HACSECGKTFATSSGLKQHKHIH and FVCEVCHKSYTQFSNLCRHKRMH. The C2H2-type 7; atypical zinc finger occupies 218–240; it reads IKCKDCGQMFSTTSSLNKHRRFC. Disordered stretches follow at residues 371–421 and 529–612; these read ITEN…SDKD and PLKV…EKKD. Positions 379–390 are enriched in basic and acidic residues; it reads RPHEKVSDHSES. Positions 397–411 are enriched in polar residues; it reads STPSGSDLETTSGSD. Residues 420–433 carry the Nuclear localization signal motif; it reads KDKLKENGKLYKDK. Residues 529–542 show a composition bias toward basic and acidic residues; that stretch reads PLKVEPESPKESKK. Residues 551–555 carry the CTBP-binding motif 1 motif; sequence AFDLT. Positions 564–576 are enriched in low complexity; the sequence is SPNAPSKSSAPTS. Residues 582-586 carry the CTBP-binding motif 2 motif; the sequence is PLDLS. Positions 588–598 are enriched in polar residues; it reads GSRSRATTTKQ. Over residues 599-612 the composition is skewed to basic and acidic residues; sequence TESRKNHIFGEKKD. 3 consecutive C2H2-type zinc fingers follow at residues 731 to 753, 759 to 782, and 788 to 810; these read YTCRYCGKIFPRSANLTRHLRTH, YRCKYCDRSFSISSNLQRHIRNIH, and FKCHLCDRCFGQQTNLDRHLKKH. The interval 928–951 is disordered; it reads KSEVNCKVSPSRHDDDDDDEEEDF.

As to quaternary structure, homooligomer. Interacts with ctbp.

Its subcellular location is the nucleus. The protein localises to the nucleus speckle. Functionally, transcriptional repressor during pronephros development. Plays a role in regionalization of the pronephros; may promote formation of the distal tubule and duct over formation of the glomus and proximal tubule. This Xenopus laevis (African clawed frog) protein is MDS1 and EVI1 complex locus protein EVI1-B (mecom-b).